Here is a 264-residue protein sequence, read N- to C-terminus: MTAVTECFRSLRSQGNCALIPFITAGDPDLSTTAQALRILDRAGADLIELGVPYSDPLADGPVIQSAATRALNRGVKLEDVLEIVKNAQGEVKAPIILFTYYNPIYHRGIDVFLDQIKAAGVSGLVVPDLPLEEAESLLQPAAAKGIEVILLVAPTSPPERIQAIALQSQGFIYLVSVTGVTGMRKQVATRVEELLDSIRSVTDKPVGVGFGISEPTQALQVKNWGADAVIVGSAMVKRLADNSPSDGLKSLEEFCRSLKQAIQ.

Residues Glu-49 and Asp-60 each act as proton acceptor in the active site.

The protein belongs to the TrpA family. As to quaternary structure, tetramer of two alpha and two beta chains.

It catalyses the reaction (1S,2R)-1-C-(indol-3-yl)glycerol 3-phosphate + L-serine = D-glyceraldehyde 3-phosphate + L-tryptophan + H2O. It functions in the pathway amino-acid biosynthesis; L-tryptophan biosynthesis; L-tryptophan from chorismate: step 5/5. Its function is as follows. The alpha subunit is responsible for the aldol cleavage of indoleglycerol phosphate to indole and glyceraldehyde 3-phosphate. The polypeptide is Tryptophan synthase alpha chain (Microcystis aeruginosa (strain NIES-843 / IAM M-2473)).